An 86-amino-acid chain; its full sequence is Acyl carrier protein (86 aa).

In terms of domain architecture, Carrier spans 10–85; the sequence is DKIEQKVIEM…DVIKYIKERQ (76 aa). S45 carries the O-(pantetheine 4'-phosphoryl)serine modification.

This sequence belongs to the acyl carrier protein (ACP) family. In terms of processing, 4'-phosphopantetheine is transferred from CoA to a specific serine of apo-ACP by AcpS. This modification is essential for activity because fatty acids are bound in thioester linkage to the sulfhydryl of the prosthetic group.

It localises to the cytoplasm. Its pathway is lipid metabolism; fatty acid biosynthesis. In terms of biological role, carrier of the growing fatty acid chain in fatty acid biosynthesis. The protein is Acyl carrier protein of Rickettsia africae (strain ESF-5).